Here is a 250-residue protein sequence, read N- to C-terminus: 2-C-methyl-D-erythritol 4-phosphate cytidylyltransferase (250 aa).

The protein belongs to the IspD/TarI cytidylyltransferase family. IspD subfamily.

The catalysed reaction is 2-C-methyl-D-erythritol 4-phosphate + CTP + H(+) = 4-CDP-2-C-methyl-D-erythritol + diphosphate. It participates in isoprenoid biosynthesis; isopentenyl diphosphate biosynthesis via DXP pathway; isopentenyl diphosphate from 1-deoxy-D-xylulose 5-phosphate: step 2/6. Catalyzes the formation of 4-diphosphocytidyl-2-C-methyl-D-erythritol from CTP and 2-C-methyl-D-erythritol 4-phosphate (MEP). The protein is 2-C-methyl-D-erythritol 4-phosphate cytidylyltransferase of Streptomyces avermitilis (strain ATCC 31267 / DSM 46492 / JCM 5070 / NBRC 14893 / NCIMB 12804 / NRRL 8165 / MA-4680).